A 349-amino-acid polypeptide reads, in one-letter code: Ion-translocating oxidoreductase complex subunit D (349 aa).

The next 3 membrane-spanning stretches (helical) occupy residues 20–42, 77–99, and 124–144; these read VMQRVILCLLPGLVVQCAFFGWG, SAMLTAILIGVAIPPLAPWWMIV, and AMAAYVLLLVSFPVQMTTWIA. Thr185 carries the post-translational modification FMN phosphoryl threonine. The next 5 membrane-spanning stretches (helical) occupy residues 212–232, 239–259, 265–285, 291–311, and 315–335; these read STGVGWFWVNLAYLAGGLVLL, WHISTGVLLGLFVASSIGFLL, ASPLMHLFSGATMLAAFFIAT, ATSPRGRIIFGALIGVLVYII, and GGYPDAFAFAVLLANLCAPFI.

This sequence belongs to the NqrB/RnfD family. As to quaternary structure, the complex is composed of six subunits: RnfA, RnfB, RnfC, RnfD, RnfE and RnfG. Requires FMN as cofactor.

It localises to the cell inner membrane. Functionally, part of a membrane-bound complex that couples electron transfer with translocation of ions across the membrane. The protein is Ion-translocating oxidoreductase complex subunit D of Shewanella baltica (strain OS195).